A 130-amino-acid chain; its full sequence is kinetoplast-associated protein 2-2 (130 aa).

Positions 1–10 (MLRRTVSNFA) are excised as a propeptide. Residues 95–130 (ETKQAQRAKAQKAQKKPKSAKSKVKKAAKKAKKSKK) are disordered. The span at 103–130 (KAQKAQKKPKSAKSKVKKAAKKAKKSKK) shows a compositional bias: basic residues.

This sequence belongs to the KAP family. In terms of assembly, associates with the kinetoplast DNA network.

It is found in the mitochondrion matrix. Its subcellular location is the kinetoplast. Its function is as follows. Histone H1-like DNA-binding protein involved in the organization and segregation of kinetoplast DNA (kDNA). The mitochondrial DNA of kinetoplastid protozoa consists of about 5,000 minicircles and 20 to 30 maxicircles. These circular DNAs are held together by catenation into a highly organized compact disk structure referred to as a kinetoplast DNA (kDNA) network. Binds preferentially to a specific fragment of minicircle DNA and is able to compact kDNA networks through DNA charge neutralization and condensation. The polypeptide is kinetoplast-associated protein 2-2 (KAP2-2) (Crithidia fasciculata).